The primary structure comprises 105 residues: Probable molt-inhibiting hormone (105 aa).

Residues 1–28 (MYRMPMRFWLTAVVMVVVGALLLDTASA) form the signal peptide. Disulfide bonds link Cys-35-Cys-72, Cys-52-Cys-68, and Cys-55-Cys-81.

It belongs to the arthropod CHH/MIH/GIH/VIH hormone family. As to expression, expressed in the postmolt, intermolt, and premolt stages of the shrimp eyestalks and the brain.

It localises to the secreted. In terms of biological role, inhibits Y-organs where molting hormone (ecdysteroid) is secreted. A molting cycle is initiated when MIH secretion diminishes or stops. This Metapenaeus ensis (Greasyback shrimp) protein is Probable molt-inhibiting hormone.